The following is a 388-amino-acid chain: Putative O-antigen polymerase (388 aa).

A run of 9 helical transmembrane segments spans residues 23–43 (IFYP…GYEI), 57–77 (LIFL…TESV), 97–117 (VHNV…MRLS), 143–163 (NFSA…IWSK), 180–200 (IVFI…MVII), 215–235 (VYLI…LRGL), 312–332 (ISAE…GVLW), 338–358 (YISV…IFYH), and 361–381 (FMTN…FSQF).

It is found in the cell inner membrane. Functionally, may function in vitro as a polymerase that catalyzes the polymerization of the O-antigen repeat units on the periplasmic face of the inner membrane, leading to the formation of the lipid-linked O-antigen molecule. However, E.coli K12 strains do not normally produce the O-antigen in vivo due to mutations in the rfb gene cluster. K12 strains are phenotypically rough, their lipopolysaccharide having a complete core structure, but no O-antigen. The sequence is that of Putative O-antigen polymerase from Escherichia coli (strain K12).